A 256-amino-acid polypeptide reads, in one-letter code: Exosome complex component RRP41-like (256 aa).

The protein belongs to the RNase PH family. In terms of assembly, probable component of the RNA exosome complex. As to expression, highly expressed in imbibed seeds and young seedlings.

It is found in the cytoplasm. The protein localises to the nucleus. In terms of biological role, non-catalytic component of the RNA exosome complex which has 3'-&gt;5' exoribonuclease activity and participates in a multitude of cellular RNA processing, maturation and degradation events. In vitro, is a processive phosphorolytic exonuclease and requires a single-stranded poly(A) tail on the substrate RNA for its activity. Plays an important role in seed germination and early seedling growth by mediating specific cytoplasmic mRNA decay of transcripts coding for the abscisic acid (ABA) biosynthetic enzymes NCED5 and NCED6, and the ABA signaling transcription factors ABI3 and ABI4. The chain is Exosome complex component RRP41-like from Arabidopsis thaliana (Mouse-ear cress).